The primary structure comprises 82 residues: ATP synthase subunit c (82 aa).

The next 2 helical transmembrane spans lie at 6-26 (LGLT…GCGI) and 49-69 (IMVT…YALV).

This sequence belongs to the ATPase C chain family. F-type ATPases have 2 components, F(1) - the catalytic core - and F(0) - the membrane proton channel. F(1) has five subunits: alpha(3), beta(3), gamma(1), delta(1), epsilon(1). F(0) has three main subunits: a(1), b(2) and c(10-14). The alpha and beta chains form an alternating ring which encloses part of the gamma chain. F(1) is attached to F(0) by a central stalk formed by the gamma and epsilon chains, while a peripheral stalk is formed by the delta and b chains.

It is found in the cell inner membrane. In terms of biological role, f(1)F(0) ATP synthase produces ATP from ADP in the presence of a proton or sodium gradient. F-type ATPases consist of two structural domains, F(1) containing the extramembraneous catalytic core and F(0) containing the membrane proton channel, linked together by a central stalk and a peripheral stalk. During catalysis, ATP synthesis in the catalytic domain of F(1) is coupled via a rotary mechanism of the central stalk subunits to proton translocation. Its function is as follows. Key component of the F(0) channel; it plays a direct role in translocation across the membrane. A homomeric c-ring of between 10-14 subunits forms the central stalk rotor element with the F(1) delta and epsilon subunits. In Nitratidesulfovibrio vulgaris (strain ATCC 29579 / DSM 644 / CCUG 34227 / NCIMB 8303 / VKM B-1760 / Hildenborough) (Desulfovibrio vulgaris), this protein is ATP synthase subunit c.